We begin with the raw amino-acid sequence, 176 residues long: Translation initiation factor IF-3 (176 aa).

It belongs to the IF-3 family. In terms of assembly, monomer.

The protein resides in the cytoplasm. Functionally, IF-3 binds to the 30S ribosomal subunit and shifts the equilibrium between 70S ribosomes and their 50S and 30S subunits in favor of the free subunits, thus enhancing the availability of 30S subunits on which protein synthesis initiation begins. This chain is Translation initiation factor IF-3, found in Streptococcus mutans serotype c (strain ATCC 700610 / UA159).